The following is a 90-amino-acid chain: Bombyxin D-1 (90 aa).

An N-terminal signal peptide occupies residues 1–18 (MKLLGFFLSWVSVCAIVS). 3 disulfide bridges follow: Cys27–Cys77, Cys39–Cys90, and Cys76–Cys81. A propeptide spans 48–68 (SVAHYAGYGWPLLPSLSEERG) (c peptide like).

The protein belongs to the insulin family. In terms of assembly, heterodimer of a B chain and an A chain linked by two disulfide bonds.

It is found in the secreted. In terms of biological role, brain peptide responsible for activation of prothoracic glands to produce ecdysone in insects. The protein is Bombyxin D-1 (BBXD1) of Bombyx mori (Silk moth).